A 993-amino-acid chain; its full sequence is Chromosome transmission fidelity protein 18 (993 aa).

2 disordered regions span residues 1-52 and 65-107; these read MPFI…DHDG and FEIQ…DGLE. Acidic residues-rich tracts occupy residues 42–51 and 97–106; these read LDDDDDDDHD and DNDDDDDDGL. Residue 321-328 coordinates ATP; that stretch reads GPPGLGKT. The disordered stretch occupies residues 887-915; sequence RKNSENLSSTGSKKSTTKSDDIETPANPA.

This sequence belongs to the activator 1 small subunits family. CTF18 subfamily.

Its subcellular location is the nucleus. Its function is as follows. Essential for the fidelity of chromosome transmission. Required for the DNA replication block checkpoint. Replication factor C (RFC) complex has an essential but redundant activity in sister chromatid cohesion establishment. This chain is Chromosome transmission fidelity protein 18 (ctf18), found in Emericella nidulans (strain FGSC A4 / ATCC 38163 / CBS 112.46 / NRRL 194 / M139) (Aspergillus nidulans).